A 251-amino-acid chain; its full sequence is MIPKEQKGPVMAAMGDLTEPVPTLDLGKKLSVPQDLMMEELSLRNNRGSLLFQKRQRRVQKFTFELAASQRAMLAGSARRKVTGTAESGTVANANGPEGPNYRSELHIFPASPGASLGGPEGAHPAAAPAGCVPSPSALAPGYAEPLKGVPPEKFNHTAISKGYRCPWQEFVSYRDYQSDGRSHTPSPNDYRNFNKTPVPFGGPLVGGTFPRPGTPFIPEPLSGLELLRLRPSFNRVAQGWVRNLPESEEL.

S31 is modified (phosphoserine). Positions 50–67 are binding to ACTN2, PPP3CA and TCAP; the sequence is LLFQKRQRRVQKFTFELA. The binding to FLNC stretch occupies residues 67–110; that stretch reads AASQRAMLAGSARRKVTGTAESGTVANANGPEGPNYRSELHIFP. A disordered region spans residues 79-102; sequence RRKVTGTAESGTVANANGPEGPNY. The interval 186-207 is binding to ACTN2; sequence PSPNDYRNFNKTPVPFGGPLVG.

Belongs to the myozenin family. As to quaternary structure, interacts with ACTN2, LDB3, FLNC, PPP3CA and TCAP. In terms of tissue distribution, expressed specifically in skeletal muscle. Not detected in heart.

It is found in the cytoplasm. It localises to the myofibril. The protein resides in the sarcomere. The protein localises to the z line. Its function is as follows. Myozenins may serve as intracellular binding proteins involved in linking Z line proteins such as alpha-actinin, gamma-filamin, TCAP/telethonin, LDB3/ZASP and localizing calcineurin signaling to the sarcomere. Plays an important role in the modulation of calcineurin signaling. May play a role in myofibrillogenesis. The chain is Myozenin-3 from Homo sapiens (Human).